Here is a 374-residue protein sequence, read N- to C-terminus: Small ribosomal subunit protein uS4m (374 aa).

Residues 259 to 323 enclose the S4 RNA-binding domain; it reads GRLENFLMRL…KKLYFFIKSK (65 aa).

Belongs to the universal ribosomal protein uS4 family.

Its subcellular location is the mitochondrion. In Acanthamoeba castellanii (Amoeba), this protein is Small ribosomal subunit protein uS4m (RPS4).